The primary structure comprises 356 residues: Histidinol-phosphate aminotransferase (356 aa).

Lys-217 is subject to N6-(pyridoxal phosphate)lysine.

It belongs to the class-II pyridoxal-phosphate-dependent aminotransferase family. Histidinol-phosphate aminotransferase subfamily. In terms of assembly, homodimer. Pyridoxal 5'-phosphate serves as cofactor.

The enzyme catalyses L-histidinol phosphate + 2-oxoglutarate = 3-(imidazol-4-yl)-2-oxopropyl phosphate + L-glutamate. It participates in amino-acid biosynthesis; L-histidine biosynthesis; L-histidine from 5-phospho-alpha-D-ribose 1-diphosphate: step 7/9. This Chromobacterium violaceum (strain ATCC 12472 / DSM 30191 / JCM 1249 / CCUG 213 / NBRC 12614 / NCIMB 9131 / NCTC 9757 / MK) protein is Histidinol-phosphate aminotransferase.